We begin with the raw amino-acid sequence, 712 residues long: DNA ligase (712 aa).

Residues 53 to 57 (DAEFD), 103 to 104 (SL), and Glu133 each bind NAD(+). The active-site N6-AMP-lysine intermediate is the Lys135. NAD(+)-binding residues include Arg156, Glu196, Lys315, and Lys339. Residues Cys433, Cys436, Cys452, and Cys458 each coordinate Zn(2+). A BRCT domain is found at 622 to 711 (SIERTLEGLS…PERDAEDGEP (90 aa)).

Belongs to the NAD-dependent DNA ligase family. LigA subfamily. Requires Mg(2+) as cofactor. The cofactor is Mn(2+).

The enzyme catalyses NAD(+) + (deoxyribonucleotide)n-3'-hydroxyl + 5'-phospho-(deoxyribonucleotide)m = (deoxyribonucleotide)n+m + AMP + beta-nicotinamide D-nucleotide.. DNA ligase that catalyzes the formation of phosphodiester linkages between 5'-phosphoryl and 3'-hydroxyl groups in double-stranded DNA using NAD as a coenzyme and as the energy source for the reaction. It is essential for DNA replication and repair of damaged DNA. This is DNA ligase from Mycolicibacterium gilvum (strain PYR-GCK) (Mycobacterium gilvum (strain PYR-GCK)).